The primary structure comprises 522 residues: Neuropeptide FF receptor 2 (522 aa).

The Extracellular segment spans residues 1–147 (MNSFFGTPAA…NYYLHQPQVA (147 aa)). The tract at residues 25–49 (KEAGRERRALSVQQRGGPAWSGSLE) is disordered. Residues Asn110, Asn122, and Asn133 are each glycosylated (N-linked (GlcNAc...) asparagine). A helical membrane pass occupies residues 148-168 (AIFIISYFLIFFLCMMGNTVV). Residues 169–184 (CFIVMRNKHMHTVTNL) are Cytoplasmic-facing. A helical membrane pass occupies residues 185 to 205 (FILNLAISDLLVGIFCMPITL). Residues 206 to 221 (LDNIIAGWPFGNTMCK) lie on the Extracellular side of the membrane. Residues Cys220 and Cys308 are joined by a disulfide bond. The chain crosses the membrane as a helical span at residues 222–242 (ISGLVQGISVAASVFTLVAIA). Topologically, residues 243-262 (VDRFQCVVYPFKPKLTIKTA) are cytoplasmic. A helical transmembrane segment spans residues 263–283 (FVIIMIIWVLAITIMSPSAVM). The Extracellular portion of the chain corresponds to 284–319 (LHVQEEKYYRVRLNSQNKTSPVYWCREDWPNQEMRK). The N-linked (GlcNAc...) asparagine glycan is linked to Asn300. Residues 320-340 (IYTTVLFANIYLAPLSLIVIM) form a helical membrane-spanning segment. The Cytoplasmic portion of the chain corresponds to 341–377 (YGRIGISLFRAAVPHTGRKNQEQWHVVSRKKQKIIKM). The helical transmembrane segment at 378-398 (LLIVALLFILSWLPLWTLMML) threads the bilayer. The Extracellular portion of the chain corresponds to 399 to 413 (SDYADLSPNELQIIN). Residues 414 to 434 (IYIYPFAHWLAFGNSSVNPII) form a helical membrane-spanning segment. At 435–522 (YGFFNENFRR…LKETTNSSEI (88 aa)) the chain is on the cytoplasmic side.

The protein belongs to the G-protein coupled receptor 1 family. In terms of tissue distribution, isoform 1 is abundant in placenta. Relatively highly expressed in thymus, testis, and small intestine. Expressed at low levels in several tissues including spleen, prostate, brain, heart, ovary, colon, kidney, lung, liver and pancreas and not expressed in skeletal muscle and leukocytes. Isoform 2 expression is highest in placenta (but at relatively low level compared to isoform 1). Very low level of expression in numerous tissues including adipose tissue and many brain regions. Isoform 3 is expressed in brain and heart and, at lower levels, in kidney, liver, lung and pancreas.

It is found in the cell membrane. Receptor for NPAF (A-18-F-amide) and NPFF (F-8-F-amide) neuropeptides, also known as morphine-modulating peptides. Can also be activated by a variety of naturally occurring or synthetic FMRF-amide like ligands. This receptor mediates its action by association with G proteins that activate a phosphatidylinositol-calcium second messenger system. The protein is Neuropeptide FF receptor 2 of Homo sapiens (Human).